We begin with the raw amino-acid sequence, 206 residues long: Holliday junction branch migration complex subunit RuvA (206 aa).

Positions 1 to 64 are domain I; it reads MIGRLRGNLL…EDAQLLYGFN (64 aa). Residues 65 to 143 are domain II; that stretch reads TKKERALFRE…GWGAGDLFTP (79 aa). Positions 144–157 are flexible linker; that stretch reads ADTTSMDDASDLIS. Residues 158-206 form a domain III region; the sequence is SPQSAQDEAVSALISLGYKPVQASKMVSQVAKPDMTSESLIRESLKSMI.

The protein belongs to the RuvA family. Homotetramer. Forms an RuvA(8)-RuvB(12)-Holliday junction (HJ) complex. HJ DNA is sandwiched between 2 RuvA tetramers; dsDNA enters through RuvA and exits via RuvB. An RuvB hexamer assembles on each DNA strand where it exits the tetramer. Each RuvB hexamer is contacted by two RuvA subunits (via domain III) on 2 adjacent RuvB subunits; this complex drives branch migration. In the full resolvosome a probable DNA-RuvA(4)-RuvB(12)-RuvC(2) complex forms which resolves the HJ.

The protein resides in the cytoplasm. The RuvA-RuvB-RuvC complex processes Holliday junction (HJ) DNA during genetic recombination and DNA repair, while the RuvA-RuvB complex plays an important role in the rescue of blocked DNA replication forks via replication fork reversal (RFR). RuvA specifically binds to HJ cruciform DNA, conferring on it an open structure. The RuvB hexamer acts as an ATP-dependent pump, pulling dsDNA into and through the RuvAB complex. HJ branch migration allows RuvC to scan DNA until it finds its consensus sequence, where it cleaves and resolves the cruciform DNA. The protein is Holliday junction branch migration complex subunit RuvA of Aliivibrio salmonicida (strain LFI1238) (Vibrio salmonicida (strain LFI1238)).